Here is a 477-residue protein sequence, read N- to C-terminus: Glycogen synthase (477 aa).

An ADP-alpha-D-glucose-binding site is contributed by Lys15.

This sequence belongs to the glycosyltransferase 1 family. Bacterial/plant glycogen synthase subfamily.

The catalysed reaction is [(1-&gt;4)-alpha-D-glucosyl](n) + ADP-alpha-D-glucose = [(1-&gt;4)-alpha-D-glucosyl](n+1) + ADP + H(+). It participates in glycan biosynthesis; glycogen biosynthesis. In terms of biological role, synthesizes alpha-1,4-glucan chains using ADP-glucose. This chain is Glycogen synthase, found in Shigella flexneri.